The following is a 210-amino-acid chain: Regulator of G-protein signaling 17 (210 aa).

The segment at 1 to 21 (MRKRQQSQNEGTQAVSQAPGN) is disordered. An RGS domain is found at 84-200 (NFDKMMKTPA…LNSQIYKAFV (117 aa)). The residue at position 137 (Y137) is a Phosphotyrosine.

As to quaternary structure, interacts with GNAI1 and GNAQ. Interacts with GNAZ and GNAI2. Interacts with OPRM1. Forms a complex with mu-opioid receptors and G(alpha)z/i2 subunits, including GNAZ and GNAI2; the formation of this complex results in mu-opioid receptor desensitization. Interacts with HINT1. N- and O-glycosylated in synapsomal membranes. Post-translationally, serine phosphorylated in synapsomal membranes. In terms of processing, sumoylated with SUMO1 and SUM02 in synaptosomes. The sumoylated forms act as a scaffold for sequestering mu-opioid receptor-activated G(alpha) subunits. Desumoylated by HINT1. In terms of tissue distribution, detected in brain (at protein level). Highly expressed in the hypothalamus, periaqueductal gray matter, and pons-medulla. Lower levels in the thalamus, cortex and spinal cord. Weak expression in the striatum and cerebellum.

The protein localises to the membrane. The protein resides in the synapse. It is found in the synaptosome. It localises to the nucleus. Its subcellular location is the cytoplasm. Regulates G protein-coupled receptor signaling cascades, including signaling via muscarinic acetylcholine receptor CHRM2 and dopamine receptor DRD2. Inhibits signal transduction by increasing the GTPase activity of G protein alpha subunits, thereby driving them into their inactive GDP-bound form. Binds selectively to GNAZ and GNAI2 subunits, accelerates their GTPase activity and regulates their signaling activities. Negatively regulates mu-opioid receptor-mediated activation of the G-proteins. The sequence is that of Regulator of G-protein signaling 17 (Rgs17) from Mus musculus (Mouse).